A 400-amino-acid chain; its full sequence is tRNA(Met) cytidine acetate ligase (400 aa).

ATP is bound by residues Ile7–His20, Gly101, Asn159, and Arg184–Ile185.

It belongs to the TmcAL family.

The protein resides in the cytoplasm. The catalysed reaction is cytidine(34) in elongator tRNA(Met) + acetate + ATP = N(4)-acetylcytidine(34) in elongator tRNA(Met) + AMP + diphosphate. Functionally, catalyzes the formation of N(4)-acetylcytidine (ac(4)C) at the wobble position of elongator tRNA(Met), using acetate and ATP as substrates. First activates an acetate ion to form acetyladenylate (Ac-AMP) and then transfers the acetyl group to tRNA to form ac(4)C34. The polypeptide is tRNA(Met) cytidine acetate ligase (Caldicellulosiruptor bescii (strain ATCC BAA-1888 / DSM 6725 / KCTC 15123 / Z-1320) (Anaerocellum thermophilum)).